Consider the following 80-residue polypeptide: Defensin-like protein 50 (80 aa).

Positions 1 to 27 are cleaved as a signal peptide; that stretch reads MGFTKIVVTFFLVVMLAVSSSSQNAMA. Intrachain disulfides connect cysteine 39–cysteine 79, cysteine 43–cysteine 66, cysteine 52–cysteine 77, and cysteine 56–cysteine 78.

This sequence belongs to the DEFL family.

The protein resides in the secreted. This Arabidopsis thaliana (Mouse-ear cress) protein is Defensin-like protein 50 (LCR49).